The following is a 298-amino-acid chain: Small ribosomal subunit protein uS2 (298 aa).

It belongs to the universal ribosomal protein uS2 family.

This Leifsonia xyli subsp. xyli (strain CTCB07) protein is Small ribosomal subunit protein uS2.